The chain runs to 82 residues: Cytochrome b559 subunit alpha (82 aa).

Residues 21–35 (VIHSVTIPSLFIAGW) form a helical membrane-spanning segment. His23 contributes to the heme binding site.

Belongs to the PsbE/PsbF family. In terms of assembly, heterodimer of an alpha subunit and a beta subunit. PSII is composed of 1 copy each of membrane proteins PsbA, PsbB, PsbC, PsbD, PsbE, PsbF, PsbH, PsbI, PsbJ, PsbK, PsbL, PsbM, PsbT, PsbX, PsbY, PsbZ, Psb30/Ycf12, at least 3 peripheral proteins of the oxygen-evolving complex and a large number of cofactors. It forms dimeric complexes. Heme b serves as cofactor.

The protein localises to the plastid. It localises to the chloroplast thylakoid membrane. In terms of biological role, this b-type cytochrome is tightly associated with the reaction center of photosystem II (PSII). PSII is a light-driven water:plastoquinone oxidoreductase that uses light energy to abstract electrons from H(2)O, generating O(2) and a proton gradient subsequently used for ATP formation. It consists of a core antenna complex that captures photons, and an electron transfer chain that converts photonic excitation into a charge separation. In Ostreococcus tauri, this protein is Cytochrome b559 subunit alpha.